The sequence spans 91 residues: Potassium channel toxin BuTXK-beta (91 aa).

Positions 1–20 are cleaved as a signal peptide; that stretch reads MQRNLVVLLLLGMVALSSCG. Positions 21 to 27 are excised as a propeptide; sequence LREKHFQ. One can recognise a BetaSPN-type CS-alpha/beta domain in the interval 54–91; that stretch reads QFGCPAYQGYCDDHCQDIKKEEGFCHGMKCKCGIPMGF. 3 cysteine pairs are disulfide-bonded: cysteine 57–cysteine 78, cysteine 64–cysteine 83, and cysteine 68–cysteine 85.

Belongs to the long chain scorpion toxin family. Class 1 subfamily. Expressed by the venom gland.

It is found in the secreted. In terms of biological role, inhibits voltage-gated potassium channel. This Buthus israelis (Israeli scorpion) protein is Potassium channel toxin BuTXK-beta.